We begin with the raw amino-acid sequence, 596 residues long: Pentatricopeptide repeat-containing protein At5g38730 (596 aa).

PPR repeat units follow at residues 132-166, 167-201, 202-236, 237-271, 272-302, 306-340, 341-375, 376-410, 411-445, 446-480, 481-515, and 516-550; these read VSHV…GLKP, HLQA…GVVA, NIHV…GVFP, DIFT…GVAP, NIVT…IKDD, NHVT…GFSP, GVVT…KIEP, DNIT…GLKL, DMYS…GFSP, GYAT…GLCA, DVAL…GLVG, and DSVI…RLMV.

It belongs to the PPR family. P subfamily.

The polypeptide is Pentatricopeptide repeat-containing protein At5g38730 (Arabidopsis thaliana (Mouse-ear cress)).